Here is a 209-residue protein sequence, read N- to C-terminus: FMN-dependent NADH:quinone oxidoreductase (209 aa).

FMN contacts are provided by residues Ser9 and 15–17 (SNS).

This sequence belongs to the azoreductase type 1 family. Homodimer. FMN is required as a cofactor.

It carries out the reaction 2 a quinone + NADH + H(+) = 2 a 1,4-benzosemiquinone + NAD(+). It catalyses the reaction N,N-dimethyl-1,4-phenylenediamine + anthranilate + 2 NAD(+) = 2-(4-dimethylaminophenyl)diazenylbenzoate + 2 NADH + 2 H(+). Functionally, quinone reductase that provides resistance to thiol-specific stress caused by electrophilic quinones. Its function is as follows. Also exhibits azoreductase activity. Catalyzes the reductive cleavage of the azo bond in aromatic azo compounds to the corresponding amines. This Bordetella bronchiseptica (strain ATCC BAA-588 / NCTC 13252 / RB50) (Alcaligenes bronchisepticus) protein is FMN-dependent NADH:quinone oxidoreductase.